The following is a 133-amino-acid chain: Thioredoxin H2 (133 aa).

The interval 1 to 22 (MGGALSTVFGSGEDATAAGTES) is disordered. The Thioredoxin domain maps to 6–133 (STVFGSGEDA…LEKKVSKLRA (128 aa)). Active-site nucleophile residues include cysteine 59 and cysteine 62. Cysteine 59 and cysteine 62 are disulfide-bonded.

The protein belongs to the thioredoxin family. Plant H-type subfamily. In terms of assembly, interacts with MDH1.

Its subcellular location is the cytoplasm. The protein localises to the mitochondrion. Its function is as follows. Thiol-disulfide oxidoreductase probably involved in the redox regulation of a number of cytosolic enzymes. Possesses insulin disulfide bonds reducing activity. The protein is Thioredoxin H2 (TRX2) of Arabidopsis thaliana (Mouse-ear cress).